The primary structure comprises 1550 residues: Protein TIME FOR COFFEE (1550 aa).

Disordered regions lie at residues 1–191 (MDRN…PVSP), 207–304 (VPRK…PVAV), 325–505 (TSKQ…SERG), 708–736 (QGSVLGRSSNPVQDKNSQSTSKSSETAQR), 779–805 (RPPNSGITSSGPTATSTSMNGSASATP), 859–1023 (FNGS…KAGV), 1086–1130 (ASLE…QSIA), 1163–1196 (ALPQSSGSLPTSHHQQLLQQQQQQHMQRSQSQQP), 1213–1296 (AASA…SVAA), and 1321–1435 (NSKP…PKHG). Residues 43-80 (EAARLRDRGGSNKKDRDRERDRDRERERERDRERDRLN) show a composition bias toward basic and acidic residues. A compositionally biased stretch (acidic residues) spans 100-118 (DGGDDSSEESVNDDEEYDD). Low complexity predominate over residues 134–151 (SNNISAASFSSSLSNHHN). Over residues 157 to 171 (LHHHHHSHNNNHQRK) the composition is skewed to basic residues. The segment covering 241–250 (RQISSTSPAN) has biased composition (polar residues). Over residues 292-301 (KSSSSKLSSP) the composition is skewed to low complexity. Residues 348 to 366 (RVSSPISNPQTLPQSSITL) show a composition bias toward polar residues. A compositionally biased stretch (low complexity) spans 367 to 379 (AANSSSSNVSAIA). Positions 409-432 (SKSQVPFSNQLKSSGSGEGNSSVL) are enriched in polar residues. 2 stretches are compositionally biased toward basic and acidic residues: residues 447 to 461 (DSEKKENNLSKDETI) and 473 to 490 (SDGEGAKSSSPEKEKFEI). Polar residues-rich tracts occupy residues 713–736 (GRSSNPVQDKNSQSTSKSSETAQR), 783–803 (SGITSSGPTATSTSMNGSASA), and 884–992 (LTGQ…NLGL). Residues 1112–1126 (SGGGAIGKTSGGNGG) show a composition bias toward gly residues. A compositionally biased stretch (polar residues) spans 1164–1173 (LPQSSGSLPT). Low complexity predominate over residues 1174–1195 (SHHQQLLQQQQQQHMQRSQSQQ). Positions 1234-1253 (NMTTSPAGTTKFANANSGFP) are enriched in polar residues. Positions 1254 to 1273 (QNLVQSSSNQVQSQQWKNNS) are enriched in low complexity. Polar residues-rich tracts occupy residues 1274–1296 (PRTTNTTQAQSPSMLSPSTSVAA), 1321–1342 (NSKPMTSGSPMQQVQGGTNHQA), and 1351–1360 (SPSTSSVSKN). A compositionally biased stretch (low complexity) spans 1361-1382 (ASGSPRTTASASSAANKGGQAS). Polar residues-rich tracts occupy residues 1383 to 1397 (TTTHSASQPSKNLQP) and 1405 to 1419 (GGRNNGPSVLGNPTT). A compositionally biased stretch (low complexity) spans 1420 to 1435 (SSGSKSQQQQQLPKHG).

In terms of assembly, interacts with MYC2.

It localises to the nucleus. Its function is as follows. Regulator of normal clock function. Acts in the mid to late night. Contributes to the amplitude of circadian clocks. May act on the transcriptional induction of LATE ELONGATED HYPOCOTYL (LHY). Inhibits MYC2 protein accumulation, acting as a negative factor in the JA-signaling pathway. The sequence is that of Protein TIME FOR COFFEE (TIC) from Arabidopsis thaliana (Mouse-ear cress).